A 100-amino-acid polypeptide reads, in one-letter code: Apolipoprotein C-II (100 aa).

The first 22 residues, 1-22, serve as a signal peptide directing secretion; it reads MSSQFLLAFFLVLLVLGYEVQG. Residues 66–74 are lipid binding; the sequence is SVDEKLRDM. Residues 78-100 are lipoprotein lipase cofactor; sequence SSAAMSTYAGIFTDQLFTLLKGE.

The protein belongs to the apolipoprotein C2 family. In terms of processing, proapolipoprotein C-II is synthesized as a sialic acid containing glycoprotein which is subsequently desialylated prior to its proteolytic processing. Proapolipoprotein C-II, the major form found in plasma undergoes proteolytic cleavage of its N-terminal hexapeptide to generate the mature form apolipoprotein C-II, which occurs as the minor form in plasma.

The protein localises to the secreted. Functionally, component of chylomicrons, very low-density lipoproteins (VLDL), low-density lipoproteins (LDL), and high-density lipoproteins (HDL) in plasma. Plays an important role in lipoprotein metabolism as an activator of lipoprotein lipase. This Cricetulus griseus (Chinese hamster) protein is Apolipoprotein C-II (APOC2).